A 281-amino-acid chain; its full sequence is Probable endonuclease 4 (281 aa).

The Zn(2+) site is built by His-69, His-109, Glu-145, Asp-179, His-182, His-216, Asp-229, His-231, and Glu-261.

The protein belongs to the AP endonuclease 2 family. Zn(2+) serves as cofactor.

The catalysed reaction is Endonucleolytic cleavage to 5'-phosphooligonucleotide end-products.. Its function is as follows. Endonuclease IV plays a role in DNA repair. It cleaves phosphodiester bonds at apurinic or apyrimidinic (AP) sites, generating a 3'-hydroxyl group and a 5'-terminal sugar phosphate. The protein is Probable endonuclease 4 of Pectobacterium carotovorum subsp. carotovorum (strain PC1).